The sequence spans 623 residues: Peptide transporter PTR2 (623 aa).

Disordered regions lie at residues 1–20 (MVSSDFENEKQPDVVQVLTD) and 31–58 (DYEDPKNYSTNYVDDYNPKGLRRPTPQE). The next 11 membrane-spanning stretches (helical) occupy residues 134–154 (ALTNLLTFLAYVFPLIGGYLG), 163–183 (AIQWGVFFGFVAHLFFIFASI), 191–211 (NAGLGLCVIAIITLSAGSGLM), 250–270 (ITNVFYLAINIGAFLQIATSY), 277–297 (FWLAFFVPMILYIIVPIFLFI), 385–405 (IIFNLADSGLGSVETSLIGAM), 418–438 (FNPLTIIILIPILEYGLYPLL), 448–468 (IWRICFGFVVCSFSQIAGFVL), 499–519 (LFILAAAGECWAYTTAYELAY), 529–549 (LVYALFLVMSAFSAALSLAIT), and 557–577 (LHWVFLAIGLAGFLCAIVMLA).

This sequence belongs to the major facilitator superfamily. Proton-dependent oligopeptide transporter (POT/PTR) (TC 2.A.17) family.

It localises to the membrane. Its function is as follows. Uptake of small peptides. This chain is Peptide transporter PTR2 (PTR2), found in Candida albicans (Yeast).